The chain runs to 222 residues: Large ribosomal subunit protein mL64 (222 aa).

2 disordered regions span residues 14 to 40 (LTATLAPGSRGYRAPPPPRREPGPWWP) and 188 to 222 (KRLKEEKQRQKQEARAAALAAAAAQDPAASGAPSS). The stretch at 144–213 (EKAQADKERR…AALAAAAAQD (70 aa)) forms a coiled coil. Residues 184 to 200 (KKERKRLKEEKQRQKQE) carry the Nuclear localization signal motif. The span at 188–201 (KRLKEEKQRQKQEA) shows a compositional bias: basic and acidic residues. The segment covering 202 to 216 (RAAALAAAAAQDPAA) has biased composition (low complexity).

This sequence belongs to the mitochondrion-specific ribosomal protein mL64 family. As to quaternary structure, component of the mitochondrial ribosome large subunit (39S) which comprises a 16S rRNA and about 50 distinct proteins. Interacts with GADD45A, GADD45B and GADD45G. Interacts with NR4A1 via the NR4A1 AB domain. Interacts with ATAD3A and ATAD3B.

Its subcellular location is the mitochondrion. It is found in the nucleus. Its function is as follows. Acts as a negative regulator of G1 to S cell cycle phase progression by inhibiting cyclin-dependent kinases. Inhibitory effects are additive with GADD45 proteins but also occur in the absence of GADD45 proteins. Acts as a repressor of the orphan nuclear receptor NR4A1 by inhibiting AB domain-mediated transcriptional activity. May be involved in the hormone-mediated regulation of NR4A1 transcriptional activity. May play a role in mitochondrial protein synthesis. The polypeptide is Large ribosomal subunit protein mL64 (GADD45GIP1) (Chlorocebus aethiops (Green monkey)).